Consider the following 303-residue polypeptide: Probable serine acetyltransferase 1 (303 aa).

Disordered regions lie at residues 1–36 (MTAG…ESDA) and 271–290 (NPAR…ESMD).

Belongs to the transferase hexapeptide repeat family. In terms of assembly, homomultimer.

The catalysed reaction is L-serine + acetyl-CoA = O-acetyl-L-serine + CoA. It participates in amino-acid biosynthesis; L-cysteine biosynthesis; L-cysteine from L-serine: step 1/2. The protein is Probable serine acetyltransferase 1 (SAT1) of Oryza sativa subsp. japonica (Rice).